We begin with the raw amino-acid sequence, 385 residues long: Succinate--CoA ligase [ADP-forming] subunit beta (385 aa).

Positions 9-243 (KEILSAYGIP…YSQLDTLEIN (235 aa)) constitute an ATP-grasp domain. Residues lysine 45, 52–54 (GRG), glutamate 98, valine 101, and glutamate 106 each bind ATP. Asparagine 198 and aspartate 212 together coordinate Mg(2+). Residues asparagine 263 and 320-322 (GIM) each bind substrate.

The protein belongs to the succinate/malate CoA ligase beta subunit family. Heterotetramer of two alpha and two beta subunits. Mg(2+) serves as cofactor.

The enzyme catalyses succinate + ATP + CoA = succinyl-CoA + ADP + phosphate. The catalysed reaction is GTP + succinate + CoA = succinyl-CoA + GDP + phosphate. It functions in the pathway carbohydrate metabolism; tricarboxylic acid cycle; succinate from succinyl-CoA (ligase route): step 1/1. Functionally, succinyl-CoA synthetase functions in the citric acid cycle (TCA), coupling the hydrolysis of succinyl-CoA to the synthesis of either ATP or GTP and thus represents the only step of substrate-level phosphorylation in the TCA. The beta subunit provides nucleotide specificity of the enzyme and binds the substrate succinate, while the binding sites for coenzyme A and phosphate are found in the alpha subunit. The sequence is that of Succinate--CoA ligase [ADP-forming] subunit beta from Geobacter sulfurreducens (strain ATCC 51573 / DSM 12127 / PCA).